A 155-amino-acid polypeptide reads, in one-letter code: 6,7-dimethyl-8-ribityllumazine synthase (155 aa).

5-amino-6-(D-ribitylamino)uracil is bound by residues Phe23, 57 to 59, and 81 to 83; these read AFE and AVI. Residue 86-87 participates in (2S)-2-hydroxy-3-oxobutyl phosphate binding; it reads AT. The Proton donor role is filled by His89. A 5-amino-6-(D-ribitylamino)uracil-binding site is contributed by Phe114. Arg128 is a (2S)-2-hydroxy-3-oxobutyl phosphate binding site.

It belongs to the DMRL synthase family.

The catalysed reaction is (2S)-2-hydroxy-3-oxobutyl phosphate + 5-amino-6-(D-ribitylamino)uracil = 6,7-dimethyl-8-(1-D-ribityl)lumazine + phosphate + 2 H2O + H(+). It participates in cofactor biosynthesis; riboflavin biosynthesis; riboflavin from 2-hydroxy-3-oxobutyl phosphate and 5-amino-6-(D-ribitylamino)uracil: step 1/2. Catalyzes the formation of 6,7-dimethyl-8-ribityllumazine by condensation of 5-amino-6-(D-ribitylamino)uracil with 3,4-dihydroxy-2-butanone 4-phosphate. This is the penultimate step in the biosynthesis of riboflavin. The protein is 6,7-dimethyl-8-ribityllumazine synthase of Geotalea uraniireducens (strain Rf4) (Geobacter uraniireducens).